A 23-amino-acid polypeptide reads, in one-letter code: Alyteserin-1c (23 aa).

Position 23 is a serine amide (serine 23).

As to expression, expressed by the skin glands.

The protein resides in the secreted. It is found in the target cell membrane. Its function is as follows. Antibacterial peptide with amphipathic alpha-helical structure that shows selective growth-inhibitory activity against Gram-negative bacteria but low hemolytic activity against human erythrocytes (LC(50)=145-220 uM). It is moderately active against the Gram-negative bacteria E.coli (MIC=25 uM), K.pneumoniae (MIC=50 uM), P.aeruginosa (MIC=25 uM), A.baumannii (MIC=6 uM), and is weaky active against the Gram-positive S.aureus (MIC=100-250 uM). The sequence is that of Alyteserin-1c from Alytes obstetricans (Common midwife toad).